A 1204-amino-acid chain; its full sequence is Exportin-5 (1204 aa).

Ala2 is modified (N-acetylalanine). A necessary for interaction with Ran region spans residues 2-108 (AMDQVNALCE…ANGTLNILEE (107 aa)). Position 396 is an N6-acetyllysine (Lys396). A necessary for interaction with ILF3 region spans residues 533–640 (ELLQMVLNFD…KQLLSNELLL (108 aa)). The interval 641–642 (TQ) is pre-miRNA binding. A Phosphoserine modification is found at Ser826.

The protein belongs to the exportin family. As to quaternary structure, component of a nuclear export receptor complex composed of XPO5, RAN, dsRNA-binding proteins and dsRNA. Found in a nuclear export complex with XPO5, RAN, EEF1A1, and aminoacylated tRNA. Found in a nuclear export complex with XPO5, RAN, ILF3 and dsRNA. Found in a nuclear export complex with XPO5, RAN and pre-miRNA. Found in a nuclear export complex with XPO5, RAN, ILF3 and minihelix VA1 dsRNA. Found in a nuclear export complex with XPO5, RAN, ILF3, ZNF346 and dsRNA. Interacts with EEF1A1, ILF3, NUP153, NUP214 and ZNF346. Interacts with RAN and cargo proteins in a GTP-dependent manner. Interacts with isoform 5 of ADAR/ADAR1 (via DRBM domains). Interacts with SMAD4; mediates nuclear export of SMAD4. Interacts with RAN (GTP-bound form). As to expression, expressed in heart, brain, placenta, lung, skeletal muscle, kidney and pancreas.

Its subcellular location is the nucleus. The protein resides in the cytoplasm. Its function is as follows. Mediates the nuclear export of proteins bearing a double-stranded RNA binding domain (dsRBD) and double-stranded RNAs (cargos). XPO5 in the nucleus binds cooperatively to the RNA and to the GTPase Ran in its active GTP-bound form. Proteins containing dsRBDs can associate with this trimeric complex through the RNA. Docking of this complex to the nuclear pore complex (NPC) is mediated through binding to nucleoporins. Upon transit of a nuclear export complex into the cytoplasm, hydrolysis of Ran-GTP to Ran-GDP (induced by RANBP1 and RANGAP1, respectively) cause disassembly of the complex and release of the cargo from the export receptor. XPO5 then returns to the nuclear compartment by diffusion through the nuclear pore complex, to mediate another round of transport. The directionality of nuclear export is thought to be conferred by an asymmetric distribution of the GTP- and GDP-bound forms of Ran between the cytoplasm and nucleus. Overexpression may in some circumstances enhance RNA-mediated gene silencing (RNAi). Mediates nuclear export of isoform 5 of ADAR/ADAR1 in a RanGTP-dependent manner. In terms of biological role, mediates the nuclear export of micro-RNA precursors, which form short hairpins. Also mediates the nuclear export of synthetic short hairpin RNAs used for RNA interference. In some circumstances can also mediate the nuclear export of deacylated and aminoacylated tRNAs. Specifically recognizes dsRNAs that lack a 5'-overhang in a sequence-independent manner, have only a short 3'-overhang, and that have a double-stranded length of at least 15 base-pairs. Binding is dependent on Ran-GTP. Functionally, (Microbial infection) Mediates the nuclear export of adenovirus VA1 dsRNA. This Homo sapiens (Human) protein is Exportin-5 (XPO5).